The following is a 259-amino-acid chain: Probable metal transport system ATP-binding protein CPn_0348/CP_0412/CPj0348/CpB0355 (259 aa).

The ABC transporter domain maps to 3–241 (VKDETFWSVH…TIFQTYGCEI (239 aa)). 41 to 48 (GPNGAGKS) lines the ATP pocket.

The protein belongs to the ABC transporter superfamily.

It is found in the cell inner membrane. In terms of biological role, part of an ATP-driven transport system CPn0346/CPn0347/CPn0348/CPn0349 for a metal. Probably responsible for energy coupling to the transport system. The polypeptide is Probable metal transport system ATP-binding protein CPn_0348/CP_0412/CPj0348/CpB0355 (Chlamydia pneumoniae (Chlamydophila pneumoniae)).